Consider the following 176-residue polypeptide: ATP synthase subunit delta (176 aa).

The protein belongs to the ATPase delta chain family. In terms of assembly, F-type ATPases have 2 components, F(1) - the catalytic core - and F(0) - the membrane proton channel. F(1) has five subunits: alpha(3), beta(3), gamma(1), delta(1), epsilon(1). F(0) has three main subunits: a(1), b(2) and c(10-14). The alpha and beta chains form an alternating ring which encloses part of the gamma chain. F(1) is attached to F(0) by a central stalk formed by the gamma and epsilon chains, while a peripheral stalk is formed by the delta and b chains.

The protein localises to the cell inner membrane. In terms of biological role, f(1)F(0) ATP synthase produces ATP from ADP in the presence of a proton or sodium gradient. F-type ATPases consist of two structural domains, F(1) containing the extramembraneous catalytic core and F(0) containing the membrane proton channel, linked together by a central stalk and a peripheral stalk. During catalysis, ATP synthesis in the catalytic domain of F(1) is coupled via a rotary mechanism of the central stalk subunits to proton translocation. Functionally, this protein is part of the stalk that links CF(0) to CF(1). It either transmits conformational changes from CF(0) to CF(1) or is implicated in proton conduction. This is ATP synthase subunit delta from Aliarcobacter butzleri (strain RM4018) (Arcobacter butzleri).